Reading from the N-terminus, the 554-residue chain is DNA ligase B (554 aa).

Residue K122 is the N6-AMP-lysine intermediate of the active site.

This sequence belongs to the NAD-dependent DNA ligase family. LigB subfamily.

The enzyme catalyses NAD(+) + (deoxyribonucleotide)n-3'-hydroxyl + 5'-phospho-(deoxyribonucleotide)m = (deoxyribonucleotide)n+m + AMP + beta-nicotinamide D-nucleotide.. Functionally, catalyzes the formation of phosphodiester linkages between 5'-phosphoryl and 3'-hydroxyl groups in double-stranded DNA using NAD as a coenzyme and as the energy source for the reaction. The sequence is that of DNA ligase B from Pseudomonas fluorescens (strain SBW25).